The sequence spans 272 residues: HMP-PP phosphatase (272 aa).

The active-site Nucleophile is the Asp8. Mg(2+)-binding residues include Asp8, Asp10, and Asp212.

The protein belongs to the HAD-like hydrolase superfamily. Cof family. Mg(2+) is required as a cofactor.

The catalysed reaction is 4-amino-2-methyl-5-(diphosphooxymethyl)pyrimidine + H2O = 4-amino-2-methyl-5-(phosphooxymethyl)pyrimidine + phosphate + H(+). In terms of biological role, catalyzes the hydrolysis of 4-amino-2-methyl-5-hydroxymethylpyrimidine pyrophosphate (HMP-PP) to 4-amino-2-methyl-5-hydroxymethylpyrimidine phosphate (HMP-P). The chain is HMP-PP phosphatase from Escherichia coli O6:H1 (strain CFT073 / ATCC 700928 / UPEC).